The chain runs to 448 residues: Asparagine--tRNA ligase (448 aa).

Belongs to the class-II aminoacyl-tRNA synthetase family. Homodimer.

It is found in the cytoplasm. The catalysed reaction is tRNA(Asn) + L-asparagine + ATP = L-asparaginyl-tRNA(Asn) + AMP + diphosphate + H(+). This Streptococcus mutans serotype c (strain ATCC 700610 / UA159) protein is Asparagine--tRNA ligase.